The chain runs to 284 residues: 2-dehydro-3-deoxyphosphooctonate aldolase (284 aa).

It belongs to the KdsA family.

Its subcellular location is the cytoplasm. The catalysed reaction is D-arabinose 5-phosphate + phosphoenolpyruvate + H2O = 3-deoxy-alpha-D-manno-2-octulosonate-8-phosphate + phosphate. It functions in the pathway carbohydrate biosynthesis; 3-deoxy-D-manno-octulosonate biosynthesis; 3-deoxy-D-manno-octulosonate from D-ribulose 5-phosphate: step 2/3. Its pathway is bacterial outer membrane biogenesis; lipopolysaccharide biosynthesis. This is 2-dehydro-3-deoxyphosphooctonate aldolase from Burkholderia multivorans (strain ATCC 17616 / 249).